A 93-amino-acid chain; its full sequence is uncharacterized protein (93 aa).

It is found in the plastid. The protein localises to the chloroplast. This is an uncharacterized protein from Diacronema lutheri (Unicellular marine alga).